The chain runs to 156 residues: Cyanate hydratase (156 aa).

Residues Arg96, Glu99, and Ser122 contribute to the active site.

The protein belongs to the cyanase family.

It carries out the reaction cyanate + hydrogencarbonate + 3 H(+) = NH4(+) + 2 CO2. Functionally, catalyzes the reaction of cyanate with bicarbonate to produce ammonia and carbon dioxide. The chain is Cyanate hydratase from Pseudomonas aeruginosa (strain UCBPP-PA14).